The chain runs to 304 residues: Putative dihydroorotate dehydrogenase A (fumarate) (304 aa).

FMN is bound by residues serine 21 and 45–46; that span reads KS. Residues lysine 45, 69-73, and asparagine 129 contribute to the substrate site; that span reads NAVGL. Residue asparagine 129 coordinates FMN. Cysteine 132 serves as the catalytic Nucleophile. Positions 168 and 194 each coordinate FMN. Residue 195–196 coordinates substrate; it reads NT. Residues glycine 220, 246 to 247, and 268 to 269 each bind FMN; these read GG and GS.

Belongs to the dihydroorotate dehydrogenase family. Type 1 subfamily. Homodimer. FMN is required as a cofactor.

Its subcellular location is the cytoplasm. The enzyme catalyses (S)-dihydroorotate + fumarate = orotate + succinate. The protein operates within pyrimidine metabolism; UMP biosynthesis via de novo pathway. Its function is as follows. Catalyzes the conversion of dihydroorotate to orotate with fumarate as the electron acceptor. This Pediococcus pentosaceus (strain ATCC 25745 / CCUG 21536 / LMG 10740 / 183-1w) protein is Putative dihydroorotate dehydrogenase A (fumarate) (pyrD).